A 128-amino-acid polypeptide reads, in one-letter code: Large ribosomal subunit protein eL22 (128 aa).

Belongs to the eukaryotic ribosomal protein eL22 family. Component of the large ribosomal subunit.

The protein localises to the cytoplasm. Component of the large ribosomal subunit. The ribosome is a large ribonucleoprotein complex responsible for the synthesis of proteins in the cell. This Ictalurus punctatus (Channel catfish) protein is Large ribosomal subunit protein eL22 (rpl22).